Consider the following 471-residue polypeptide: Collagen alpha-3(IV) chain (471 aa).

The interval 1–238 is triple-helical region; that stretch reads GLPGRKGPVG…KGKPGDTGPP (238 aa). Positions 1–241 are disordered; the sequence is GLPGRKGPVG…PGDTGPPAAG (241 aa). Pro residues predominate over residues 52–61; sequence MPGPPGPPGS. Positions 106–108 match the Cell attachment site motif; that stretch reads RGD. Residues 127–141 are compositionally biased toward pro residues; it reads PGPPGPPGQSGPKGP. A compositionally biased stretch (low complexity) spans 165–174; sequence SAGEPGMQGE. Positions 175 to 187 are enriched in pro residues; that stretch reads PGPPGPPGDPGPC. 2 positions are modified to hydroxyproline: Pro232 and Pro238. The Collagen IV NC1 domain occupies 246–470; that stretch reads GFVFTRHSQT…SRCQVCMKMR (225 aa). 6 disulfide bridges follow: Cys261–Cys352, Cys294–Cys349, Cys306–Cys312, Cys371–Cys466, Cys405–Cys463, and Cys417–Cys423. Residue Met334 forms an S-Lysyl-methionine sulfilimine (Met-Lys) (interchain with K-452) linkage. Residue Lys452 forms an S-Lysyl-methionine sulfilimine (Lys-Met) (interchain with M-334) linkage.

The protein belongs to the type IV collagen family. As to quaternary structure, there are six type IV collagen isoforms, alpha 1(IV)-alpha 6(IV), each of which can form a triple helix structure with 2 other chains to generate type IV collagen network. The alpha 3(IV) chain forms a triple helical protomer with alpha 4(IV) and alpha 5(IV); this triple helical structure dimerizes through NC1-NC1 domain interactions such that the alpha 3(IV), alpha 4(IV) and alpha 5(IV) chains of one protomer connect with the alpha 5(IV), alpha 4(IV) and alpha 3(IV) chains of the opposite promoter, respectively. Interacts with ITGB3. Associates with LAMB2 at the neuromuscular junction and in GBM. Prolines at the third position of the tripeptide repeating unit (G-X-Y) are hydroxylated in some or all of the chains. Post-translationally, type IV collagens contain numerous cysteine residues which are involved in inter- and intramolecular disulfide bonding. 12 of these, located in the NC1 domain, are conserved in all known type IV collagens. In terms of processing, the trimeric structure of the NC1 domains is stabilized by covalent bonds between Lys and Met residues. Phosphorylated. Thought to be phosphorylated by CERT, but CERT does not have kinase activity.

It is found in the secreted. The protein resides in the extracellular space. It localises to the extracellular matrix. Its subcellular location is the basement membrane. Type IV collagen is the major structural component of glomerular basement membranes (GBM), forming a 'chicken-wire' meshwork together with laminins, proteoglycans and entactin/nidogen. In Bos taurus (Bovine), this protein is Collagen alpha-3(IV) chain (COL4A3).